The chain runs to 371 residues: MSTSAPINRRLTKKIYVGDVAIGGDAPISVQSMTNTDTCDVAATVAQIERCVEAGADLMRVSTPTMDTVKAFGEIRKLVSVPLIADVHFDHKIALAVAAAGADCLRINPGNIGSDAKVREVVACAKHYNIPIRIGVNAGSLEKDIQRKYKEPNGAAMLESAMRHIDILERLNFDQYKVSVKASNVFLTMDAYRLISAQIDNPLHLGVTEAGVYRTGSVKSAIALGGLLLDGIGDTIRISLAAEPEEEIKIGFDILKSLNIRSNGVNFIACPSCSRQEFDVIRVMTALESRLEDIREPMNLSVIGCKVNGPGEAKEADIGIVGAAPKSLVYRMGEKSHLIDTDNLVDEIEGMVRAHAEELAKKRENEIIRVR.

Residues Cys270, Cys273, Cys305, and Glu312 each contribute to the [4Fe-4S] cluster site.

This sequence belongs to the IspG family. The cofactor is [4Fe-4S] cluster.

The enzyme catalyses (2E)-4-hydroxy-3-methylbut-2-enyl diphosphate + oxidized [flavodoxin] + H2O + 2 H(+) = 2-C-methyl-D-erythritol 2,4-cyclic diphosphate + reduced [flavodoxin]. The protein operates within isoprenoid biosynthesis; isopentenyl diphosphate biosynthesis via DXP pathway; isopentenyl diphosphate from 1-deoxy-D-xylulose 5-phosphate: step 5/6. In terms of biological role, converts 2C-methyl-D-erythritol 2,4-cyclodiphosphate (ME-2,4cPP) into 1-hydroxy-2-methyl-2-(E)-butenyl 4-diphosphate. In Psychrobacter arcticus (strain DSM 17307 / VKM B-2377 / 273-4), this protein is 4-hydroxy-3-methylbut-2-en-1-yl diphosphate synthase (flavodoxin).